A 483-amino-acid chain; its full sequence is MCCKAIKLGNARVFPVTTFRDAKKVRWINLLKSGKAKRNKSGKIIKQGEFQSKDVQDARIQPYRRWFSNTRVISQDVLNMFRESFAEKLNDPCKVLLKQNKLPMSLLMEPTKTRKANIIDIEPFDDTFGKKSXRKRAKLYASSIENLSNFAFESYENYIKKNSEYENVDKNIQKSFEAIFSKGTSKRIWNELYKXIDSSDVIIQLLDARNPLGTRCKHVEEYLKKEKPHKHMILLLNKCDLIPTWCTREWIKQLSKEYPTLAFHASINNPFGKGSLIQLLRQFSKLHSNRRQISVGFIGYPNTGKSSVINTLRSKKVCNTAPIPGETKVWQYVRMTSKIFMIDCPGIVPPNSNDSETEIIIKGALRIEKVSNPEQYIHAILNLCETKHLERTYQISGWENDSTKFIELLARKTGKLLKGGEVDESSIAKMVINDFIRGKIPWFIAPAQENDPSNIKLSNNTLVEKNHLTTLDDEIYNDANPNA.

The 162-residue stretch at 189–350 (WNELYKXIDS…MIDCPGIVPP (162 aa)) folds into the CP-type G domain. GTP contacts are provided by residues 299–306 (GYPNTGKS) and 343–347 (DCPGI).

It belongs to the TRAFAC class YlqF/YawG GTPase family. NOG2 subfamily.

It is found in the nucleus. The protein localises to the nucleolus. GTPase that associates with pre-60S ribosomal subunits in the nucleolus and is required for their nuclear export and maturation. The polypeptide is Nucleolar GTP-binding protein 2 (NOG2) (Pneumocystis carinii).